The following is a 380-amino-acid chain: Cytochrome b (380 aa).

A run of 4 helical transmembrane segments spans residues 34-54 (FGSL…LLAT), 78-99 (WLIR…YLHI), 114-134 (WNTG…GYVL), and 179-199 (FFAL…IHLT). 2 residues coordinate heme b: H84 and H98. Heme b contacts are provided by H183 and H197. H202 lines the a ubiquinone pocket. The next 4 membrane-spanning stretches (helical) occupy residues 227–247 (LKDI…ALFS), 289–309 (LGGV…PFLH), 321–341 (ISQL…WIGS), and 348–368 (FIII…ALFP).

Belongs to the cytochrome b family. The cytochrome bc1 complex contains 11 subunits: 3 respiratory subunits (MT-CYB, CYC1 and UQCRFS1), 2 core proteins (UQCRC1 and UQCRC2) and 6 low-molecular weight proteins (UQCRH/QCR6, UQCRB/QCR7, UQCRQ/QCR8, UQCR10/QCR9, UQCR11/QCR10 and a cleavage product of UQCRFS1). This cytochrome bc1 complex then forms a dimer. It depends on heme b as a cofactor.

It localises to the mitochondrion inner membrane. Its function is as follows. Component of the ubiquinol-cytochrome c reductase complex (complex III or cytochrome b-c1 complex) that is part of the mitochondrial respiratory chain. The b-c1 complex mediates electron transfer from ubiquinol to cytochrome c. Contributes to the generation of a proton gradient across the mitochondrial membrane that is then used for ATP synthesis. This Buteo buteo (Eurasian buzzard) protein is Cytochrome b (MT-CYB).